Reading from the N-terminus, the 940-residue chain is UvrABC system protein A (940 aa).

ATP is bound at residue Gly31–Ser38. The C4-type zinc finger occupies Cys253–Cys280. ABC transporter domains follow at residues Trp310–Leu587 and Ala607–Lys937. Gly640–Ser647 contacts ATP. Residues Cys740–Cys766 form a C4-type zinc finger.

The protein belongs to the ABC transporter superfamily. UvrA family. As to quaternary structure, forms a heterotetramer with UvrB during the search for lesions. Interacts with TRCF (Mfd). UvrB and TRCF binding to UvrA could be mutually exclusive.

The protein localises to the cytoplasm. Functionally, the UvrABC repair system catalyzes the recognition and processing of DNA lesions. UvrA is an ATPase and a DNA-binding protein. A damage recognition complex composed of 2 UvrA and 2 UvrB subunits scans DNA for abnormalities. When the presence of a lesion has been verified by UvrB, the UvrA molecules dissociate. This chain is UvrABC system protein A, found in Escherichia coli (strain K12).